We begin with the raw amino-acid sequence, 519 residues long: Circadian clock oscillator protein KaiC 1 (519 aa).

2 KaiC domains span residues methionine 1–phenylalanine 248 and alanine 262–glutamate 519. ATP is bound by residues glycine 50, threonine 51, glycine 52, lysine 53, threonine 54, leucine 55, serine 90, lysine 225, leucine 226, arginine 227, threonine 229, histidine 231, threonine 241, threonine 291, glycine 292, threonine 293, glycine 294, lysine 295, threonine 296, and leucine 297. Mg(2+) is bound at residue threonine 54. Threonine 296 contributes to the Mg(2+) binding site. Glutamate 319 contributes to the Mg(2+) binding site. Tryptophan 332 is an ATP binding site. Serine 432 carries the post-translational modification Phosphoserine; by autocatalysis. Threonine 433 carries the phosphothreonine; by autocatalysis modification. The ATP site is built by arginine 452, lysine 458, methionine 459, arginine 460, serine 462, histidine 464, and lysine 466.

The protein belongs to the KaiC family. As to quaternary structure, homohexamer; hexamerization is dependent on ATP-binding. Core component of the KaiABC complex, at least composed of a KaiC homohexamer, a KaiB dimer and two KaiA dimers. Interacts directly with SasA. Multimerizes, probably forming homohexamers, no interaction with KaiC2 or KaiC3 is seen. Interacts with KaiA. In another study interacts with itself, KaiB1, KaiB3 and KaiC3. Interacts with SasA (hik8). It depends on Mg(2+) as a cofactor. Post-translationally, phosphorylated on serine and threonine residues by autocatalysis. Has a 4 step phosphorylation cycle; the autokinase acts first on Thr-433, then Ser-432. When Ser-432 is modified KaiC switches to an autophosphatase mode, acting first on phospho-Thr-433 then phospho-Ser-432.

It carries out the reaction L-seryl-[protein] + ATP = O-phospho-L-seryl-[protein] + ADP + H(+). The enzyme catalyses L-threonyl-[protein] + ATP = O-phospho-L-threonyl-[protein] + ADP + H(+). It catalyses the reaction ATP + H2O = ADP + phosphate + H(+). Its activity is regulated as follows. The interaction with KaiA enhances its phosphorylation status, while the interaction with KaiB decreases it. Its function is as follows. Component of the oscillator and circadian clock in this organism, enhances fitness in a rhythmic environment. Autophosphorylates in the presence of KaiA, no activity is seen in its absence. Functionally, central component of the KaiABC oscillator complex, which constitutes the main circadian regulator in cyanobacteria. Complex composition changes during the circadian cycle to control KaiC phosphorylation. KaiA stimulates KaiC autophosphorylation, while KaiB sequesters KaiA, leading to KaiC autodephosphorylation. Clock output pathways impact the RpaA transcriptional regulator. KaiC enhances the autophosphorylation activity of SasA, which then transfers its phosphate group to RpaA to activate it. KaiB and KaiC together enhance the phospho-RpaA dephosphatase activity of CikA. Has a weak, temperature-independent ATPase activity; ATPase activity defines the circadian period. The phosphorylation state of KaiC modulates its ATPase activity and effects KaiB binding. The chain is Circadian clock oscillator protein KaiC 1 from Synechocystis sp. (strain ATCC 27184 / PCC 6803 / Kazusa).